We begin with the raw amino-acid sequence, 94 residues long: DNA-binding protein HU (94 aa).

This sequence belongs to the bacterial histone-like protein family. As to quaternary structure, homodimer.

In terms of biological role, histone-like DNA-binding protein which is capable of wrapping DNA to stabilize it, and thus to prevent its denaturation under extreme environmental conditions. It is essential for heterocyst differentiation. This is DNA-binding protein HU (hup) from Nostoc sp. (strain PCC 7120 / SAG 25.82 / UTEX 2576).